A 153-amino-acid polypeptide reads, in one-letter code: Vasotocin-neurophysin VT 1 (153 aa).

A signal peptide spans Met1–Ala20. Cys21 and Cys26 are oxidised to a cystine. Gly29 carries the glycine amide modification. Disulfide bonds link Cys41-Cys85, Cys44-Cys58, Cys52-Cys75, Cys59-Cys65, Cys92-Cys104, Cys98-Cys116, and Cys105-Cys110.

It belongs to the vasopressin/oxytocin family. Post-translationally, seven disulfide bonds are present in neurophysin.

The protein resides in the secreted. Functionally, vasotocin is an antidiuretic hormone. This chain is Vasotocin-neurophysin VT 1, found in Oncorhynchus keta (Chum salmon).